Reading from the N-terminus, the 541-residue chain is MSPAGKGPAWRQPAILAAAGAAHALSFAPDPLPAWSLAPVQVIALAVAAHASLQAPSARRALARGWLFAMFSFSLGLYWLYVSMHDYGGLAAPLAAAGVLALSAFLALFPGLACAAARWLCPPHWDASPPARARRTLYTAATWAACWAALEWLRAVVLTGFPWLNIGYAHVDSPLAGWAPLLGVHGMALLAAFAAAALAGLWQSASGRIDSRQALAAGVALLLAGAGWLLGQFSWSRPEGKPLHLRLVQGNVEQSQKFDPALLETGLRRHLELASLPPRPGEPKPDLIILPETVLPVFQDQLPASVWDAWIEVARRADTRIAMGVPLHTQPDGATGHRYTNSVIGFDASTPVEQLRTGTTAMRYDKQHLVPWGEYVPPGFRWFVDMLDIPLGDFDRGAARQPSFDIAGQRIAFNICYEDLFGPGLLPALQDGPDGRPGATIMANVSNLGWFGNTWALRQHLQIGRLRTMETARPMVAATNTGITAAIDARGRVAAALPAGRAGVLPVAVQGMTGLTPYARFGDKPALALIGLLLIAAPALG.

6 helical membrane-spanning segments follow: residues 31–51 (PLPA…AAHA), 65–85 (GWLF…VSMH), 89–109 (GLAA…LALF), 144–164 (AACW…FPWL), 181–201 (LLGV…LAGL), and 215–235 (LAAG…QFSW). The CN hydrolase domain occupies 248–511 (VQGNVEQSQK…AGVLPVAVQG (264 aa)). The active-site Proton acceptor is E292. K366 is an active-site residue. C416 functions as the Nucleophile in the catalytic mechanism.

The protein belongs to the CN hydrolase family. Apolipoprotein N-acyltransferase subfamily.

The protein resides in the cell inner membrane. It catalyses the reaction N-terminal S-1,2-diacyl-sn-glyceryl-L-cysteinyl-[lipoprotein] + a glycerophospholipid = N-acyl-S-1,2-diacyl-sn-glyceryl-L-cysteinyl-[lipoprotein] + a 2-acyl-sn-glycero-3-phospholipid + H(+). It functions in the pathway protein modification; lipoprotein biosynthesis (N-acyl transfer). Catalyzes the phospholipid dependent N-acylation of the N-terminal cysteine of apolipoprotein, the last step in lipoprotein maturation. This is Putative apolipoprotein N-acyltransferase from Bordetella parapertussis (strain 12822 / ATCC BAA-587 / NCTC 13253).